The primary structure comprises 609 residues: Glutamine--fructose-6-phosphate aminotransferase [isomerizing] (609 aa).

Cysteine 2 acts as the Nucleophile; for GATase activity in catalysis. The Glutamine amidotransferase type-2 domain maps to 2–218; sequence CGIVGAIAQR…EGDIAEITRR (217 aa). 2 consecutive SIS domains span residues 286 to 426 and 458 to 599; these read ADDL…LKGL and LAED…VDQP. Lysine 604 serves as the catalytic For Fru-6P isomerization activity.

In terms of assembly, homodimer.

It is found in the cytoplasm. It carries out the reaction D-fructose 6-phosphate + L-glutamine = D-glucosamine 6-phosphate + L-glutamate. Functionally, catalyzes the first step in hexosamine metabolism, converting fructose-6P into glucosamine-6P using glutamine as a nitrogen source. The protein is Glutamine--fructose-6-phosphate aminotransferase [isomerizing] of Salmonella typhi.